Consider the following 235-residue polypeptide: Small ribosomal subunit protein eS4 (235 aa).

The 64-residue stretch at 37–100 (LPLGIIIRDI…NETYRMFQDE (64 aa)) folds into the S4 RNA-binding domain.

It belongs to the eukaryotic ribosomal protein eS4 family.

The protein is Small ribosomal subunit protein eS4 of Methanosarcina barkeri (strain Fusaro / DSM 804).